The chain runs to 392 residues: GTPase Obg (392 aa).

The 159-residue stretch at 1 to 159 (MKFIDEALIR…RDLQLELMLL (159 aa)) folds into the Obg domain. Positions 160–333 (ADVGMLGLPN…LCRDIMDFIE (174 aa)) constitute an OBG-type G domain. Residues 166 to 173 (GLPNAGKS), 191 to 195 (FTTLV), 213 to 216 (DIPG), 283 to 286 (NKID), and 314 to 316 (SAA) contribute to the GTP site. Mg(2+) is bound by residues S173 and T193. Positions 362 to 392 (EQVFTEDDQEGDDWDDWSEDDEEGVEIIYKP) are disordered. A compositionally biased stretch (acidic residues) spans 365 to 386 (FTEDDQEGDDWDDWSEDDEEGV).

It belongs to the TRAFAC class OBG-HflX-like GTPase superfamily. OBG GTPase family. In terms of assembly, monomer. Mg(2+) serves as cofactor.

The protein localises to the cytoplasm. In terms of biological role, an essential GTPase which binds GTP, GDP and possibly (p)ppGpp with moderate affinity, with high nucleotide exchange rates and a fairly low GTP hydrolysis rate. Plays a role in control of the cell cycle, stress response, ribosome biogenesis and in those bacteria that undergo differentiation, in morphogenesis control. This is GTPase Obg from Histophilus somni (strain 129Pt) (Haemophilus somnus).